The following is an 89-amino-acid chain: Small ribosomal subunit protein uS15 (89 aa).

The protein belongs to the universal ribosomal protein uS15 family. Part of the 30S ribosomal subunit. Forms a bridge to the 50S subunit in the 70S ribosome, contacting the 23S rRNA.

Functionally, one of the primary rRNA binding proteins, it binds directly to 16S rRNA where it helps nucleate assembly of the platform of the 30S subunit by binding and bridging several RNA helices of the 16S rRNA. Its function is as follows. Forms an intersubunit bridge (bridge B4) with the 23S rRNA of the 50S subunit in the ribosome. The protein is Small ribosomal subunit protein uS15 of Oleidesulfovibrio alaskensis (strain ATCC BAA-1058 / DSM 17464 / G20) (Desulfovibrio alaskensis).